Here is a 57-residue protein sequence, read N- to C-terminus: Large ribosomal subunit protein bL32A (57 aa).

The disordered stretch occupies residues 1–22 (MAVPARRTSKTKKRLRRTHEKL). Positions 7 to 20 (RTSKTKKRLRRTHE) are enriched in basic residues.

This sequence belongs to the bacterial ribosomal protein bL32 family.

The protein is Large ribosomal subunit protein bL32A (rpmF1) of Enterococcus faecalis (strain ATCC 700802 / V583).